We begin with the raw amino-acid sequence, 83 residues long: Small ribosomal subunit protein bS16 (83 aa).

This sequence belongs to the bacterial ribosomal protein bS16 family.

The polypeptide is Small ribosomal subunit protein bS16 (Shewanella denitrificans (strain OS217 / ATCC BAA-1090 / DSM 15013)).